Here is a 279-residue protein sequence, read N- to C-terminus: Large ribosomal subunit protein uL2 (279 aa).

The interval 218-279 is disordered; it reads RPQTRGSAMN…ITRRKSNPKR (62 aa). The span at 255 to 279 shows a compositional bias: basic residues; it reads KGSKTRRKKASDKLIITRRKSNPKR.

This sequence belongs to the universal ribosomal protein uL2 family. In terms of assembly, part of the 50S ribosomal subunit. Forms a bridge to the 30S subunit in the 70S ribosome.

Its function is as follows. One of the primary rRNA binding proteins. Required for association of the 30S and 50S subunits to form the 70S ribosome, for tRNA binding and peptide bond formation. It has been suggested to have peptidyltransferase activity; this is somewhat controversial. Makes several contacts with the 16S rRNA in the 70S ribosome. This Sulfurimonas denitrificans (strain ATCC 33889 / DSM 1251) (Thiomicrospira denitrificans (strain ATCC 33889 / DSM 1251)) protein is Large ribosomal subunit protein uL2.